Consider the following 202-residue polypeptide: Na(+)-translocating NADH-quinone reductase subunit E (202 aa).

6 consecutive transmembrane segments (helical) span residues 5-25 (VSLF…FLGM), 35-55 (VSTA…TVPL), 81-101 (FLGL…LEMF), 114-134 (GVFL…LFMV), 144-164 (VVYG…LAGI), and 180-200 (LGIT…FGGM).

The protein belongs to the NqrDE/RnfAE family. Composed of six subunits; NqrA, NqrB, NqrC, NqrD, NqrE and NqrF.

The protein resides in the cell inner membrane. It carries out the reaction a ubiquinone + n Na(+)(in) + NADH + H(+) = a ubiquinol + n Na(+)(out) + NAD(+). Functionally, NQR complex catalyzes the reduction of ubiquinone-1 to ubiquinol by two successive reactions, coupled with the transport of Na(+) ions from the cytoplasm to the periplasm. NqrA to NqrE are probably involved in the second step, the conversion of ubisemiquinone to ubiquinol. The polypeptide is Na(+)-translocating NADH-quinone reductase subunit E (Psychrobacter arcticus (strain DSM 17307 / VKM B-2377 / 273-4)).